A 152-amino-acid polypeptide reads, in one-letter code: MTAMLDSFATDLTAATSLHQPGNLPHPPHAIDAENVPLSGGTDPTYGEVRWRTLINGTEAAPRDMVLGIAEFGPGHQLRPHRHTPPEFYLGLEGSGIVTIDGVPHEIRAGVALYIPGDAEHGTVAGPEGLRFAYGFASASFEAIEYRFTASA.

One can recognise a Cupin type-2 domain in the interval 69 to 124 (IAEFGPGHQLRPHRHTPPEFYLGLEGSGIVTIDGVPHEIRAGVALYIPGDAEHGTV). Positions 83, 87, 89, and 121 each coordinate Fe cation.

Belongs to the non-heme iron-dependent dioxygenase family. As to quaternary structure, homodimer. It depends on Fe(2+) as a cofactor.

The enzyme catalyses S,S-dimethyl-beta-propiothetin = acrylate + dimethyl sulfide + H(+). Functionally, able to cleave dimethylsulfoniopropionate (DMSP), releasing dimethyl sulfide (DMS) and acrylate. DMS is the principal form by which sulfur is transported from oceans to the atmosphere. The sequence is that of Dimethylsulfoniopropionate lyase DddW from Ruegeria pomeroyi (strain ATCC 700808 / DSM 15171 / DSS-3) (Silicibacter pomeroyi).